The following is a 379-amino-acid chain: Homoserine O-succinyltransferase (379 aa).

The AB hydrolase-1 domain occupies 48–357; that stretch reads NAVLICHALS…SAHGHDAFLM (310 aa). The active-site Nucleophile is the Ser154. A substrate-binding site is contributed by Arg224. Catalysis depends on residues Asp319 and His352. Position 353 (Asp353) interacts with substrate.

Belongs to the AB hydrolase superfamily. MetX family. In terms of assembly, homodimer.

The protein resides in the cytoplasm. It catalyses the reaction L-homoserine + succinyl-CoA = O-succinyl-L-homoserine + CoA. The protein operates within amino-acid biosynthesis; L-methionine biosynthesis via de novo pathway; O-succinyl-L-homoserine from L-homoserine: step 1/1. Its function is as follows. Transfers a succinyl group from succinyl-CoA to L-homoserine, forming succinyl-L-homoserine. In Neisseria gonorrhoeae (strain ATCC 700825 / FA 1090), this protein is Homoserine O-succinyltransferase.